Reading from the N-terminus, the 492-residue chain is Cyclic di-GMP phosphodiesterase VC_1295 (492 aa).

6 helical membrane-spanning segments follow: residues 14 to 34 (IYHA…FALY), 49 to 69 (EIAT…HTLL), 80 to 100 (FIQL…LYYN), 111 to 131 (LKVL…LQLS), 160 to 180 (LIGL…MVAI), and 205 to 225 (EFAF…VLWS). The 53-residue stretch at 226-278 (RMMKEILDHQERSLQAVTQGNLQVRLPVYSNDELGNVAMLTNQMLDSLEATQN) folds into the HAMP domain. The HD-GYP domain occupies 280–490 (VKTTRDVAIV…FVAIAAHFKD (211 aa)).

The protein localises to the cell inner membrane. It catalyses the reaction 3',3'-c-di-GMP + 2 H2O = 2 GMP + 2 H(+). Its function is as follows. Phosphodiesterase (PDE) that catalyzes the hydrolysis of cyclic diguanylate (c-di-GMP) to GMP in vitro. Increases motility and decreases biofilm formation in vivo. The sequence is that of Cyclic di-GMP phosphodiesterase VC_1295 from Vibrio cholerae serotype O1 (strain ATCC 39315 / El Tor Inaba N16961).